We begin with the raw amino-acid sequence, 378 residues long: Opsin Rh4 (378 aa).

Over 1 to 53 the chain is Extracellular; it reads MEPLCNASEPPLRPEARSSGNGDLQFLGWNVPPDQIQYIPEHWLTQLEPPASM. The N-linked (GlcNAc...) asparagine glycan is linked to Asn6. A helical membrane pass occupies residues 54-78; that stretch reads HYMLGVFYIFLFCASTVGNGMVIWI. The Cytoplasmic segment spans residues 79 to 90; the sequence is FSTSKSLRTPSN. The helical transmembrane segment at 91 to 111 threads the bilayer; sequence MFVLNLAVFDLIMCLKAPIFI. Residues 112 to 127 are Extracellular-facing; the sequence is YNSFHRGFALGNTWCQ. Cys126 and Cys203 are joined by a disulfide. Residues 128 to 148 traverse the membrane as a helical segment; it reads IFASIGSYSGIGAGMTNAAIG. Residues 149-167 are Cytoplasmic-facing; the sequence is YDRYNVITKPMNRNMTFTK. The chain crosses the membrane as a helical span at residues 168–192; that stretch reads AVIMNIIIWLYCTPWVVLPLTQFWD. The Extracellular portion of the chain corresponds to 193 to 216; the sequence is RFVPEGYLTSCSFDYLSDNFDTRL. The helical transmembrane segment at 217-244 threads the bilayer; it reads FVGTIFFFSFVCPTLMILYYYSQIVGHV. At 245 to 280 the chain is on the cytoplasmic side; it reads FSHEKALREQAKKMNVESLRSNVDKSKETAEIRIAK. Residues 281–304 traverse the membrane as a helical segment; that stretch reads AAITICFLFFVSWTPYGVMSLIGA. Topologically, residues 305–312 are extracellular; it reads FGDKSLLT. The chain crosses the membrane as a helical span at residues 313-337; sequence PGATMIPACTCKLVACIDPFVYAIS. Lys324 is modified (N6-(retinylidene)lysine). The Cytoplasmic portion of the chain corresponds to 338–378; the sequence is HPRYRLELQKRCPWLGVNEKSGEISSAQSTTTQEQQQTTAA.

It belongs to the G-protein coupled receptor 1 family. Opsin subfamily. Post-translationally, phosphorylated on some or all of the serine and threonine residues present in the C-terminal region.

The protein resides in the membrane. Visual pigments are the light-absorbing molecules that mediate vision. They consist of an apoprotein, opsin, covalently linked to cis-retinal. The polypeptide is Opsin Rh4 (Rh4) (Drosophila melanogaster (Fruit fly)).